The sequence spans 303 residues: UPF0282 protein MM_2966 (303 aa).

It belongs to the UPF0282 family.

The polypeptide is UPF0282 protein MM_2966 (Methanosarcina mazei (strain ATCC BAA-159 / DSM 3647 / Goe1 / Go1 / JCM 11833 / OCM 88) (Methanosarcina frisia)).